Here is a 519-residue protein sequence, read N- to C-terminus: Cytochrome P450 CYP99A1 (519 aa).

Cys-453 lines the heme pocket.

The protein belongs to the cytochrome P450 family. The cofactor is heme.

It localises to the membrane. In Sorghum bicolor (Sorghum), this protein is Cytochrome P450 CYP99A1 (CYP99A1).